The following is a 117-amino-acid chain: Ribosome-binding factor A (117 aa).

The protein belongs to the RbfA family. Monomer. Binds 30S ribosomal subunits, but not 50S ribosomal subunits or 70S ribosomes.

The protein resides in the cytoplasm. Its function is as follows. One of several proteins that assist in the late maturation steps of the functional core of the 30S ribosomal subunit. Associates with free 30S ribosomal subunits (but not with 30S subunits that are part of 70S ribosomes or polysomes). Required for efficient processing of 16S rRNA. May interact with the 5'-terminal helix region of 16S rRNA. The sequence is that of Ribosome-binding factor A from Bacillus licheniformis (strain ATCC 14580 / DSM 13 / JCM 2505 / CCUG 7422 / NBRC 12200 / NCIMB 9375 / NCTC 10341 / NRRL NRS-1264 / Gibson 46).